Here is a 236-residue protein sequence, read N- to C-terminus: UPF0257 lipoprotein YnfC (236 aa).

The N-terminal stretch at methionine 1–glycine 16 is a signal peptide. A lipid anchor (N-palmitoyl cysteine) is attached at cysteine 17. Cysteine 17 is lipidated: S-diacylglycerol cysteine.

Belongs to the UPF0257 family.

It is found in the cell membrane. In Shigella flexneri, this protein is UPF0257 lipoprotein YnfC (ynfC).